Reading from the N-terminus, the 427-residue chain is Gamma-glutamyl phosphate reductase (427 aa).

Belongs to the gamma-glutamyl phosphate reductase family.

It is found in the cytoplasm. It catalyses the reaction L-glutamate 5-semialdehyde + phosphate + NADP(+) = L-glutamyl 5-phosphate + NADPH + H(+). It participates in amino-acid biosynthesis; L-proline biosynthesis; L-glutamate 5-semialdehyde from L-glutamate: step 2/2. Catalyzes the NADPH-dependent reduction of L-glutamate 5-phosphate into L-glutamate 5-semialdehyde and phosphate. The product spontaneously undergoes cyclization to form 1-pyrroline-5-carboxylate. In Sinorhizobium medicae (strain WSM419) (Ensifer medicae), this protein is Gamma-glutamyl phosphate reductase.